A 166-amino-acid chain; its full sequence is Protein-export protein SecB (166 aa).

The protein belongs to the SecB family. Homotetramer, a dimer of dimers. One homotetramer interacts with 1 SecA dimer.

Its subcellular location is the cytoplasm. One of the proteins required for the normal export of preproteins out of the cell cytoplasm. It is a molecular chaperone that binds to a subset of precursor proteins, maintaining them in a translocation-competent state. It also specifically binds to its receptor SecA. This chain is Protein-export protein SecB, found in Acidiphilium cryptum (strain JF-5).